We begin with the raw amino-acid sequence, 89 residues long: Small ribosomal subunit protein uS15 (89 aa).

This sequence belongs to the universal ribosomal protein uS15 family. Part of the 30S ribosomal subunit. Forms a bridge to the 50S subunit in the 70S ribosome, contacting the 23S rRNA.

In terms of biological role, one of the primary rRNA binding proteins, it binds directly to 16S rRNA where it helps nucleate assembly of the platform of the 30S subunit by binding and bridging several RNA helices of the 16S rRNA. Functionally, forms an intersubunit bridge (bridge B4) with the 23S rRNA of the 50S subunit in the ribosome. This Ralstonia nicotianae (strain ATCC BAA-1114 / GMI1000) (Ralstonia solanacearum) protein is Small ribosomal subunit protein uS15.